A 723-amino-acid polypeptide reads, in one-letter code: Enolase-phosphatase E1 (723 aa).

Substrate-binding positions include 126 to 127 (SS) and Lys160. Residues 239-723 (GAGAKRKIDE…TPTPPIEAES (485 aa)) are disordered. Composition is skewed to basic and acidic residues over residues 262–284 (VKKD…DEPA) and 293–308 (AAKE…KMEV). Residues 311 to 320 (AAAAAAPPAD) are compositionally biased toward low complexity. Basic and acidic residues-rich tracts occupy residues 322–406 (AEEK…VVEE), 419–443 (AEEK…KPAE), 468–479 (EPAKEKPAEAEA), 487–496 (TKAEVVEKPA), 511–565 (SADK…KGEE), and 577–593 (VEAK…KSDA). Composition is skewed to low complexity over residues 596-606 (VSTTTTTTSTE) and 636-647 (NGEAEPAAEAVV). A compositionally biased stretch (basic and acidic residues) spans 653–666 (GKHEEKGDSDKEND).

The protein belongs to the HAD-like hydrolase superfamily. MasA/MtnC family. Monomer.

It localises to the cytoplasm. Its subcellular location is the nucleus. The catalysed reaction is 5-methylsulfanyl-2,3-dioxopentyl phosphate + H2O = 1,2-dihydroxy-5-(methylsulfanyl)pent-1-en-3-one + phosphate. It functions in the pathway amino-acid biosynthesis; L-methionine biosynthesis via salvage pathway; L-methionine from S-methyl-5-thio-alpha-D-ribose 1-phosphate: step 3/6. The protein operates within amino-acid biosynthesis; L-methionine biosynthesis via salvage pathway; L-methionine from S-methyl-5-thio-alpha-D-ribose 1-phosphate: step 4/6. In terms of biological role, bifunctional enzyme that catalyzes the enolization of 2,3-diketo-5-methylthiopentyl-1-phosphate (DK-MTP-1-P) into the intermediate 2-hydroxy-3-keto-5-methylthiopentenyl-1-phosphate (HK-MTPenyl-1-P), which is then dephosphorylated to form the acireductone 1,2-dihydroxy-3-keto-5-methylthiopentene (DHK-MTPene). The protein is Enolase-phosphatase E1 of Culex quinquefasciatus (Southern house mosquito).